A 511-amino-acid chain; its full sequence is Putative thymidine phosphorylase (511 aa).

This sequence belongs to the thymidine/pyrimidine-nucleoside phosphorylase family. Type 2 subfamily.

It catalyses the reaction thymidine + phosphate = 2-deoxy-alpha-D-ribose 1-phosphate + thymine. The protein is Putative thymidine phosphorylase of Bradyrhizobium sp. (strain BTAi1 / ATCC BAA-1182).